An 867-amino-acid chain; its full sequence is Glutamate receptor 1.2 (867 aa).

The N-terminal stretch at 1–27 (MVRICIQTPILLSFLLVLLFFISNCFA) is a signal peptide. At 28–560 (SSQNNDDDKR…SMWVFFQPLT (533 aa)) the chain is on the extracellular side. Asparagine 301, asparagine 400, asparagine 496, and asparagine 499 each carry an N-linked (GlcNAc...) asparagine glycan. The chain crosses the membrane as a helical span at residues 561–581 (PNLWITSAAFFVLTGIIVWLI). At 582–590 (ERAENKEFQ) the chain is on the cytoplasmic side. A helical membrane pass occupies residues 591-611 (GSWPQQIGVVIWFGFSTLVYA). At 612-622 (HREKLQHNLSR) the chain is on the cytoplasmic side. A helical transmembrane segment spans residues 623 to 643 (FVVTVWVFAVLILVTSYTATL). Topologically, residues 644 to 792 (TSMMTVQQIR…NPITLYRFRG (149 aa)) are extracellular. N-linked (GlcNAc...) asparagine glycosylation is found at asparagine 676, asparagine 688, asparagine 699, and asparagine 748. Residues 793–813 (LFMITGVSFAFALAVLLILWL) form a helical membrane-spanning segment. Topologically, residues 814–867 (RERWEILVNSVNIYFSQRLRHFRILFTRTIHPSPLGLDNPIGENAVQMAQRNRR) are cytoplasmic.

Belongs to the glutamate-gated ion channel (TC 1.A.10.1) family. In terms of assembly, may form heteromers. Expressed predominantly in roots and siliques.

The protein localises to the membrane. Glutamate-gated receptor that probably acts as a non-selective cation channel. May be involved in light-signal transduction and calcium homeostasis via the regulation of calcium influx into cells. This is Glutamate receptor 1.2 (GLR1.2) from Arabidopsis thaliana (Mouse-ear cress).